The chain runs to 179 residues: Large ribosomal subunit protein uL5 (179 aa).

This sequence belongs to the universal ribosomal protein uL5 family. In terms of assembly, part of the 50S ribosomal subunit; part of the 5S rRNA/L5/L18/L25 subcomplex. Contacts the 5S rRNA and the P site tRNA. Forms a bridge to the 30S subunit in the 70S ribosome.

In terms of biological role, this is one of the proteins that bind and probably mediate the attachment of the 5S RNA into the large ribosomal subunit, where it forms part of the central protuberance. In the 70S ribosome it contacts protein S13 of the 30S subunit (bridge B1b), connecting the 2 subunits; this bridge is implicated in subunit movement. Contacts the P site tRNA; the 5S rRNA and some of its associated proteins might help stabilize positioning of ribosome-bound tRNAs. This chain is Large ribosomal subunit protein uL5, found in Mannheimia succiniciproducens (strain KCTC 0769BP / MBEL55E).